The primary structure comprises 583 residues: Radixin (583 aa).

Residues 5 to 295 (INVRVTTMDA…GNHELYMRRR (291 aa)) form the FERM domain. 60–63 (KLNK) contributes to the a 1,2-diacyl-sn-glycero-3-phospho-(1D-myo-inositol) binding site. Residue lysine 83 is modified to N6-succinyllysine. Lysine 278 is an a 1,2-diacyl-sn-glycero-3-phospho-(1D-myo-inositol) binding site. Disordered stretches follow at residues 310 to 330 (REEKHQKQLERAQLENEKKKR), 376 to 407 (DQERKRAKEEAERLEKERRAAEEAKSAIAKQA), and 462 to 526 (ELKT…RVKK). Basic and acidic residues predominate over residues 376 to 400 (DQERKRAKEEAERLEKERRAAEEAK). A compositionally biased stretch (pro residues) spans 469–480 (APPPPPPPPVIP). Composition is skewed to basic and acidic residues over residues 483 to 492 (ENEHDEHDEN) and 506 to 525 (MNHRSEEERVTETQKNERVK). A Phosphothreonine; by ROCK2 modification is found at threonine 564.

Binds NHERF1. Interacts with NHERF1, NHERF2, LAYN, MME/NEP and ICAM2. Interacts with CPNE1 (via VWFA domain) and CPNE4 (via VWFA domain). Interacts (via FERM domain) with SPN/CD43 cytoplasmic tail. Interacts with CD44. Interacts with CLIC5; may work together in a complex which also includes EZR and MYO6 to stabilize linkages between the plasma membrane and subjacent actin cytoskeleton at the base of stereocilia. In terms of processing, phosphorylated by tyrosine-protein kinases. Phosphorylation by ROCK2 suppresses the head-to-tail association of the N-terminal and C-terminal halves resulting in an opened conformation which is capable of actin and membrane-binding.

It localises to the cell membrane. The protein resides in the cytoplasm. It is found in the cytoskeleton. The protein localises to the cleavage furrow. Its subcellular location is the cell projection. It localises to the microvillus. The protein resides in the stereocilium. With respect to regulation, a head-to-tail association, of the N-terminal and C-terminal halves results in a closed conformation (inactive form) which is incapable of actin or membrane-binding. Functionally, probably plays a crucial role in the binding of the barbed end of actin filaments to the plasma membrane. This is Radixin (RDX) from Homo sapiens (Human).